Consider the following 642-residue polypeptide: Myrosinase-binding protein 2 (642 aa).

Jacalin-type lectin domains follow at residues 2-151, 156-291, 334-477, and 490-633; these read SEKV…HFFA, LKHF…HFAP, PNKV…YFAP, and SKKL…HAVP. The segment covering 296 to 334 has biased composition (pro residues); the sequence is TPAPAPAPAPAPAPAPSPAPASAPVPAPAPTPAPAPAPP. Disordered stretches follow at residues 296–338 and 479–499; these read TPAP…NKVE and TNSTTPSTPSTSKKLQARGGN. The span at 479 to 490 shows a compositional bias: low complexity; that stretch reads TNSTTPSTPSTS.

The protein belongs to the jacalin lectin family. In terms of tissue distribution, expressed in flowers. Detected mainly in ovules and styles of immature flowers, but also in pistils, styles, stamens, petals and embryos. Not detected in leaves.

The polypeptide is Myrosinase-binding protein 2 (F-ATMBP) (Arabidopsis thaliana (Mouse-ear cress)).